We begin with the raw amino-acid sequence, 316 residues long: Pantothenate kinase (316 aa).

95-102 (GSVAVGKS) is an ATP binding site.

It belongs to the prokaryotic pantothenate kinase family.

Its subcellular location is the cytoplasm. It carries out the reaction (R)-pantothenate + ATP = (R)-4'-phosphopantothenate + ADP + H(+). It functions in the pathway cofactor biosynthesis; coenzyme A biosynthesis; CoA from (R)-pantothenate: step 1/5. This Yersinia pseudotuberculosis serotype O:3 (strain YPIII) protein is Pantothenate kinase.